The primary structure comprises 393 residues: Riboflavin biosynthesis protein RibBA (393 aa).

The DHBP synthase stretch occupies residues 1–200 (MQFDNIDSAL…IDDLIEYRKK (200 aa)). Residues 27–28 (RE), Asp-32, 139–143 (RNGHT), and Glu-163 contribute to the D-ribulose 5-phosphate site. A Mg(2+)-binding site is contributed by Glu-28. Residue His-142 participates in Mg(2+) binding. The interval 201–393 (LEPEIEFKAK…TKKIKMGHLI (193 aa)) is GTP cyclohydrolase II. 249–253 (RLHSA) contacts GTP. Zn(2+)-binding residues include Cys-254, Cys-265, and Cys-267. GTP contacts are provided by residues Gln-270, 291 to 293 (EGR), and Thr-313. Residue Asp-325 is the Proton acceptor; for GTP cyclohydrolase activity of the active site. Arg-327 serves as the catalytic Nucleophile; for GTP cyclohydrolase activity. GTP is bound by residues Ser-348 and Lys-353.

It in the N-terminal section; belongs to the DHBP synthase family. This sequence in the C-terminal section; belongs to the GTP cyclohydrolase II family. Mg(2+) is required as a cofactor. Mn(2+) serves as cofactor. The cofactor is Zn(2+).

The catalysed reaction is D-ribulose 5-phosphate = (2S)-2-hydroxy-3-oxobutyl phosphate + formate + H(+). It carries out the reaction GTP + 4 H2O = 2,5-diamino-6-hydroxy-4-(5-phosphoribosylamino)-pyrimidine + formate + 2 phosphate + 3 H(+). Its pathway is cofactor biosynthesis; riboflavin biosynthesis; 2-hydroxy-3-oxobutyl phosphate from D-ribulose 5-phosphate: step 1/1. It functions in the pathway cofactor biosynthesis; riboflavin biosynthesis; 5-amino-6-(D-ribitylamino)uracil from GTP: step 1/4. Functionally, catalyzes the conversion of D-ribulose 5-phosphate to formate and 3,4-dihydroxy-2-butanone 4-phosphate. In terms of biological role, catalyzes the conversion of GTP to 2,5-diamino-6-ribosylamino-4(3H)-pyrimidinone 5'-phosphate (DARP), formate and pyrophosphate. The sequence is that of Riboflavin biosynthesis protein RibBA from Staphylococcus aureus (strain COL).